We begin with the raw amino-acid sequence, 327 residues long: Thioredoxin reductase (327 aa).

FAD is bound by residues Ser10–Ala13, Ile39–Ala40, Gln44, Asn53, Val86, Cys143, Asp286, and Arg293–Ala295. Residues Cys140 and Cys143 are joined by a disulfide bond.

It belongs to the class-II pyridine nucleotide-disulfide oxidoreductase family. As to quaternary structure, homodimer. Requires FAD as cofactor.

It is found in the cytoplasm. The enzyme catalyses [thioredoxin]-dithiol + NADP(+) = [thioredoxin]-disulfide + NADPH + H(+). Component of the thioredoxin-thioredoxin reductase system which may be involved in biosynthesis of penicillins and cephalosporins and may be important in determining the thiol-disulfide redox balance. The polypeptide is Thioredoxin reductase (TRR1) (Pneumocystis jirovecii (Human pneumocystis pneumonia agent)).